A 950-amino-acid polypeptide reads, in one-letter code: MORC family CW-type zinc finger protein 1 (950 aa).

A coiled-coil region spans residues lysine 281 to glutamine 342. The CW-type zinc finger occupies serine 465–serine 530. Positions 485, 488, 511, and 522 each coordinate Zn(2+). Disordered stretches follow at residues proline 532–glutamine 551 and lysine 679–arginine 700. Basic and acidic residues predominate over residues proline 541–leucine 550. A coiled-coil region spans residues leucine 885–glycine 916.

Expressed at very low level in male germ cells.

The protein resides in the nucleus. Its function is as follows. Required for spermatogenesis. Essential for de novo DNA methylation and silencing of transposable elements in the male embryonic germ cells. Not required for piRNA biosynthesis. This chain is MORC family CW-type zinc finger protein 1, found in Mus musculus (Mouse).